The sequence spans 500 residues: Replication factor C large subunit (500 aa).

44-51 lines the ATP pocket; sequence GSPGVGKT. The interval 443–500 is disordered; the sequence is HAADDLGASDGETTNASGTASSSGDDGDADGTTDGDGSDANDGNDDDDDGQAGLSDFV. Positions 455 to 466 are enriched in low complexity; that stretch reads TTNASGTASSSG. Acidic residues predominate over residues 467-492; the sequence is DDGDADGTTDGDGSDANDGNDDDDDG.

This sequence belongs to the activator 1 small subunits family. RfcL subfamily. Heteromultimer composed of small subunits (RfcS) and large subunits (RfcL).

In terms of biological role, part of the RFC clamp loader complex which loads the PCNA sliding clamp onto DNA. The polypeptide is Replication factor C large subunit (Halorubrum lacusprofundi (strain ATCC 49239 / DSM 5036 / JCM 8891 / ACAM 34)).